The following is a 411-amino-acid chain: Serine hydroxymethyltransferase (411 aa).

120–122 (GHL) serves as a coordination point for (6S)-5,6,7,8-tetrahydrofolate. Lys225 is modified (N6-(pyridoxal phosphate)lysine). 350-352 (SPF) serves as a coordination point for (6S)-5,6,7,8-tetrahydrofolate.

Belongs to the SHMT family. In terms of assembly, homodimer. Pyridoxal 5'-phosphate serves as cofactor.

The protein resides in the cytoplasm. The enzyme catalyses (6R)-5,10-methylene-5,6,7,8-tetrahydrofolate + glycine + H2O = (6S)-5,6,7,8-tetrahydrofolate + L-serine. Its pathway is one-carbon metabolism; tetrahydrofolate interconversion. It participates in amino-acid biosynthesis; glycine biosynthesis; glycine from L-serine: step 1/1. In terms of biological role, catalyzes the reversible interconversion of serine and glycine with tetrahydrofolate (THF) serving as the one-carbon carrier. This reaction serves as the major source of one-carbon groups required for the biosynthesis of purines, thymidylate, methionine, and other important biomolecules. Also exhibits THF-independent aldolase activity toward beta-hydroxyamino acids, producing glycine and aldehydes, via a retro-aldol mechanism. This chain is Serine hydroxymethyltransferase, found in Lactobacillus gasseri (strain ATCC 33323 / DSM 20243 / BCRC 14619 / CIP 102991 / JCM 1131 / KCTC 3163 / NCIMB 11718 / NCTC 13722 / AM63).